The chain runs to 535 residues: Pentatricopeptide repeat-containing protein At5g16420, mitochondrial (535 aa).

A mitochondrion-targeting transit peptide spans 1 to 28 (MFLSRVNPTRFPPFVASRRLFSASASAA). 12 PPR repeats span residues 82-112 (NYDT…LRNS), 119-153 (GENL…GVKR), 154-189 (SVRS…GITP), 190-224 (NIFT…GLVP), 225-259 (NLVT…GWYP), 260-294 (DATT…EIEP), 295-329 (NEVT…SFMP), 330-364 (DSSL…NCMP), 365-395 (DNAL…FEKG), 399-433 (SLLT…KCKP), 434-468 (NAFT…GCFP), and 469-503 (NKTT…GKVD).

The protein belongs to the PPR family. P subfamily.

It localises to the mitochondrion. The polypeptide is Pentatricopeptide repeat-containing protein At5g16420, mitochondrial (Arabidopsis thaliana (Mouse-ear cress)).